The following is an 84-amino-acid chain: Large ribosomal subunit protein bL27 (84 aa).

Positions 1–22 (MAHKKAGGSTRNGRDSESKRLG) are disordered.

The protein belongs to the bacterial ribosomal protein bL27 family.

The sequence is that of Large ribosomal subunit protein bL27 from Shewanella amazonensis (strain ATCC BAA-1098 / SB2B).